Here is a 263-residue protein sequence, read N- to C-terminus: UDP-N-acetylenolpyruvoylglucosamine reductase (263 aa).

Arginine 146 is an active-site residue. The Proton donor role is filled by serine 188. Residue glutamate 258 is part of the active site.

This sequence belongs to the MurB family. FAD is required as a cofactor.

The protein resides in the cytoplasm. It carries out the reaction UDP-N-acetyl-alpha-D-muramate + NADP(+) = UDP-N-acetyl-3-O-(1-carboxyvinyl)-alpha-D-glucosamine + NADPH + H(+). It functions in the pathway cell wall biogenesis; peptidoglycan biosynthesis. In terms of biological role, cell wall formation. The chain is UDP-N-acetylenolpyruvoylglucosamine reductase from Helicobacter hepaticus (strain ATCC 51449 / 3B1).